Consider the following 230-residue polypeptide: Ribosomal RNA large subunit methyltransferase E (230 aa).

Positions 76, 78, 99, 115, and 139 each coordinate S-adenosyl-L-methionine. Lys179 functions as the Proton acceptor in the catalytic mechanism.

The protein belongs to the class I-like SAM-binding methyltransferase superfamily. RNA methyltransferase RlmE family.

It is found in the cytoplasm. It carries out the reaction uridine(2552) in 23S rRNA + S-adenosyl-L-methionine = 2'-O-methyluridine(2552) in 23S rRNA + S-adenosyl-L-homocysteine + H(+). In terms of biological role, specifically methylates the uridine in position 2552 of 23S rRNA at the 2'-O position of the ribose in the fully assembled 50S ribosomal subunit. The polypeptide is Ribosomal RNA large subunit methyltransferase E (Nitrobacter winogradskyi (strain ATCC 25391 / DSM 10237 / CIP 104748 / NCIMB 11846 / Nb-255)).